The primary structure comprises 339 residues: Transcription initiation factor IIB (339 aa).

A TFIIB-type zinc finger spans residues 39–70; that stretch reads EELICPVCGSKSIIKDYERAEIVCEMCGCVLQ. Residues Cys-43, Cys-46, Cys-62, and Cys-65 each contribute to the Zn(2+) site. 2 tandem repeats follow at residues 156–239 and 250–331.

This sequence belongs to the TFIIB family.

Functionally, stabilizes TBP binding to an archaeal box-A promoter. Also responsible for recruiting RNA polymerase II to the pre-initiation complex (DNA-TBP-TFIIB). The protein is Transcription initiation factor IIB of Methanococcus maripaludis (strain C5 / ATCC BAA-1333).